Here is a 309-residue protein sequence, read N- to C-terminus: UDP-URONIC ACID TRANSPORTER 1 (309 aa).

10 helical membrane-spanning segments follow: residues 9–29 (TLFI…VLLL), 43–63 (IFLT…SIVF), 78–98 (FLKV…GNIS), 104–124 (VSFN…FAYL), 131–151 (AWVT…ASGG), 152–172 (EPGF…ARAF), 193–213 (LMLY…LFME), 231–251 (WILL…NFLV), 256–278 (SALT…SILI), and 283–302 (VTVM…VAYG).

It belongs to the TPT transporter family. TPT (TC 2.A.7.9) subfamily. Ubiquitous.

Its subcellular location is the golgi apparatus membrane. Its function is as follows. UDP-glucuronic acid transporter that modulates the polysaccharide composition of seed mucilage. Transports UDP-glucuronic acid (UDP-GlcA) and UDP-galacturonic acid (UDP-GalA) in vitro. In Arabidopsis thaliana (Mouse-ear cress), this protein is UDP-URONIC ACID TRANSPORTER 1.